The chain runs to 313 residues: L-lactate dehydrogenase 1 (313 aa).

Residues V15, D36, K41, Y66, and 80 to 81 each bind NAD(+); that span reads GA. The substrate site is built by Q83 and R89. NAD(+) is bound by residues S102, 119-121, and S144; that span reads VSN. 121–124 is a substrate binding site; that stretch reads NPVD. 149–152 serves as a coordination point for substrate; it reads DTSR. Beta-D-fructose 1,6-bisphosphate-binding residues include R154 and H169. H176 serves as the catalytic Proton acceptor. At Y222 the chain carries Phosphotyrosine. T231 contributes to the substrate binding site.

It belongs to the LDH/MDH superfamily. LDH family. In terms of assembly, homotetramer.

It is found in the cytoplasm. The enzyme catalyses (S)-lactate + NAD(+) = pyruvate + NADH + H(+). Its pathway is fermentation; pyruvate fermentation to lactate; (S)-lactate from pyruvate: step 1/1. With respect to regulation, allosterically activated by fructose 1,6-bisphosphate (FBP). Its function is as follows. Catalyzes the conversion of lactate to pyruvate. This is L-lactate dehydrogenase 1 from Clostridium acetobutylicum (strain ATCC 824 / DSM 792 / JCM 1419 / IAM 19013 / LMG 5710 / NBRC 13948 / NRRL B-527 / VKM B-1787 / 2291 / W).